Here is a 469-residue protein sequence, read N- to C-terminus: Dihydroorotate dehydrogenase (quinone), mitochondrial (469 aa).

Residues 1–37 (MSSSAAALAWRRSLRDALLRGSAWRGAPAANSAAARL) constitute a mitochondrion transit peptide. A helical membrane pass occupies residues 62-82 (LLTGAMIGLAIAGGAYVSTAD). Residues 150-154 (AGFDK) and Ser-174 contribute to the FMN site. Lys-154 serves as a coordination point for substrate. Residue 199 to 203 (NRCGF) participates in substrate binding. Residues 219-247 (HGKRKMEETSSSTSPTTSDVKQGGKAGPG) form a disordered region. Over residues 227–236 (TSSSTSPTTS) the composition is skewed to low complexity. FMN is bound by residues Asn-252 and Asn-283. Substrate is bound at residue 283–288 (NVSSPN). The active-site Nucleophile is Ser-286. 2 residues coordinate FMN: Lys-328 and Ser-356. 357 to 358 (NT) is a substrate binding site. FMN is bound by residues Gly-380, Gly-409, and 430–431 (YT).

The protein belongs to the dihydroorotate dehydrogenase family. Type 2 subfamily. Requires FMN as cofactor.

It localises to the mitochondrion inner membrane. The catalysed reaction is (S)-dihydroorotate + a quinone = orotate + a quinol. The protein operates within pyrimidine metabolism; UMP biosynthesis via de novo pathway; orotate from (S)-dihydroorotate (quinone route): step 1/1. In terms of biological role, catalyzes the conversion of dihydroorotate to orotate with quinone as electron acceptor. This chain is Dihydroorotate dehydrogenase (quinone), mitochondrial (PYRD), found in Oryza sativa subsp. japonica (Rice).